Here is a 778-residue protein sequence, read N- to C-terminus: MNKKILETLEFDKVKALFEPHLLTEQGLEQLRQLAPTAKADKIKQAFAEMKEMQALFVEQPHFTILSTKEIAGVCKRLEMGADLNIEEFLLLKRVLLASRELQSFYANLENVSLEELAFWFEKLHDFPQLQGNLQAFNDAGFIENFASEELARIRRKIHDSESQVRDVLQDLLKQKAQMLTEGIVASRNGRQVLPVKNTYRNKIAGVVHDISASGNTVYIEPREVVKLSEEIASLRADERYEMLRILQEISERVRPHAAEIANDAWIIGHLDLIRAKVRFIQERQAVVPQLSENQEIQLLHVCHPLVKNAVANDVYFGQDLTAIVITGPNTGGKTIMLKTLGLTQVMAQSGLPILADKGSRVGIFEEIFADIGDEQSIEQSLSTFSSHMTNIVDILGKVNQHSLLLLDELGAGTDPQEGAALAMAILEDLRLRQIKTMATTHYPELKAYGIETAFVQNASMEFDTATLRPTYRFMQGVPGRSNAFEIAKRLGLSEVIVGDASQQIDQDNDVNRIIEQLEEQTLESRKRLDNIREVEQENLKMNRALKKLYNELNREKETELNKAREQAAEIVDMALSESDQILKNLHSKSQLKPHEIIEAKAKLKKLAPEKVDLSKNKVLQKAKKKRAPKVGDDIVVLSYGQRGTLTSQLKDGRWEAQVGLIKMTLEEKEFDLVQAQQEKAVKKKQVNVVKRTSGRGPQARLDLRGKRYEEAMNELDTFIDQALLNNMAQVDIIHGIGTGVIREGVTKYLQRNKHVKSFGYAPQNAGGSGATIVTFKG.

An ATP-binding site is contributed by 328 to 335; it reads GPNTGGKT. The region spanning 702-777 is the Smr domain; it reads LDLRGKRYEE…GSGATIVTFK (76 aa).

Belongs to the DNA mismatch repair MutS family. MutS2 subfamily. In terms of assembly, homodimer. Binds to stalled ribosomes, contacting rRNA.

Endonuclease that is involved in the suppression of homologous recombination and thus may have a key role in the control of bacterial genetic diversity. In terms of biological role, acts as a ribosome collision sensor, splitting the ribosome into its 2 subunits. Detects stalled/collided 70S ribosomes which it binds and splits by an ATP-hydrolysis driven conformational change. Acts upstream of the ribosome quality control system (RQC), a ribosome-associated complex that mediates the extraction of incompletely synthesized nascent chains from stalled ribosomes and their subsequent degradation. Probably generates substrates for RQC. The sequence is that of Endonuclease MutS2 from Streptococcus pneumoniae serotype 2 (strain D39 / NCTC 7466).